A 709-amino-acid polypeptide reads, in one-letter code: Leucine-rich repeat and calponin homology domain-containing protein 1 (709 aa).

A compositionally biased stretch (basic residues) spans 24 to 37 (LHQHHQHHQHHQHH). Positions 24–49 (LHQHHQHHQHHQHHGGTGGTGFNLPL) are disordered. LRR repeat units follow at residues 60–83 (AANS…TAPG), 86–108 (LSDT…ELCQ), 109–131 (FVSL…AIVN), 132–155 (LQML…LCGL), 157–176 (LKVL…EIGQ), 177–199 (LKQL…QIGQ), 200–223 (LKSL…LVDL), 225–244 (LVKF…CFRE), and 245–268 (MKQL…ICTK). Composition is skewed to basic and acidic residues over residues 301-312 (HQHVEDSKKDSD) and 381-390 (QEREQLAGRA). Positions 301-390 (HQHVEDSKKD…QEREQLAGRA (90 aa)) are disordered. Phosphoserine is present on residues serine 395, serine 518, and serine 522. Residues 504–526 (SNGSQYSPNEIRENSPSVSPTAN) are disordered. Threonine 581 carries the phosphothreonine modification. Residues 589-702 (MREEKELVEQ…TTVQALLDVT (114 aa)) form the Calponin-homology (CH) domain.

As to quaternary structure, interacts (via LRR repeats) with unphosphorylated DOCK8 (via DHR-2 domain); the interaction prevents the association between DOCK8 and CDC42.

The protein localises to the cytoplasm. Its function is as follows. Acts as a negative regulator of GTPase CDC42 by sequestering CDC42-guanine exchange factor DOCK8. Probably by preventing CDC42 activation, negatively regulates CD4(+) T-cell migration in response to chemokine stimulation. In Mus musculus (Mouse), this protein is Leucine-rich repeat and calponin homology domain-containing protein 1 (Lrch1).